Consider the following 938-residue polypeptide: Isoleucine--tRNA ligase (938 aa).

Residues 65–75 (PYANGSIHIGH) carry the 'HIGH' region motif. An L-isoleucyl-5'-AMP-binding site is contributed by Glu-568. A 'KMSKS' region motif is present at residues 609–613 (KMSKS). Lys-612 contributes to the ATP binding site. Zn(2+) is bound by residues Cys-905, Cys-908, Cys-921, and Cys-924.

It belongs to the class-I aminoacyl-tRNA synthetase family. IleS type 1 subfamily. In terms of assembly, monomer. Zn(2+) is required as a cofactor.

The protein localises to the cytoplasm. It catalyses the reaction tRNA(Ile) + L-isoleucine + ATP = L-isoleucyl-tRNA(Ile) + AMP + diphosphate. Its function is as follows. Catalyzes the attachment of isoleucine to tRNA(Ile). As IleRS can inadvertently accommodate and process structurally similar amino acids such as valine, to avoid such errors it has two additional distinct tRNA(Ile)-dependent editing activities. One activity is designated as 'pretransfer' editing and involves the hydrolysis of activated Val-AMP. The other activity is designated 'posttransfer' editing and involves deacylation of mischarged Val-tRNA(Ile). This chain is Isoleucine--tRNA ligase, found in Mannheimia succiniciproducens (strain KCTC 0769BP / MBEL55E).